A 387-amino-acid chain; its full sequence is Eukaryotic translation initiation factor 3 subunit M (387 aa).

Residues 181–340 (LSSKVMIELL…RKVHISSTMH (160 aa)) enclose the PCI domain.

Belongs to the eIF-3 subunit M family. Component of the eukaryotic translation initiation factor 3 (eIF-3) complex. The eIF-3 complex interacts with pix.

It localises to the cytoplasm. It is found in the golgi apparatus. Its function is as follows. Component of the eukaryotic translation initiation factor 3 (eIF-3) complex, which is involved in protein synthesis of a specialized repertoire of mRNAs and, together with other initiation factors, stimulates binding of mRNA and methionyl-tRNAi to the 40S ribosome. The eIF-3 complex specifically targets and initiates translation of a subset of mRNAs involved in cell proliferation. In Drosophila pseudoobscura pseudoobscura (Fruit fly), this protein is Eukaryotic translation initiation factor 3 subunit M.